The following is a 146-amino-acid chain: Multiple coagulation factor deficiency protein 2 (146 aa).

Positions 1–26 are cleaved as a signal peptide; it reads MTMRSLLRTPFLCGLLWAFCAPGARA. The EF-hand 1 domain occupies 68-103; the sequence is SPQELQLHYFKMHDYDGNNLLDGLELSTAITHVHKE. Asp81, Asp83, Asn85, and Glu92 together coordinate Ca(2+). Ser106 carries the post-translational modification Phosphoserine. Residues 116 to 146 form the EF-hand 2 domain; it reads ELINIIDGVLRDDDKNNDGYIDYAEFAKSLQ. 5 residues coordinate Ca(2+): Asp129, Asn131, Asp133, Tyr135, and Glu140.

In terms of assembly, interacts in a calcium-dependent manner with LMAN1.

The protein resides in the endoplasmic reticulum-Golgi intermediate compartment. It is found in the endoplasmic reticulum. The protein localises to the golgi apparatus. The MCFD2-LMAN1 complex forms a specific cargo receptor for the ER-to-Golgi transport of selected proteins. Plays a role in the secretion of coagulation factors. This is Multiple coagulation factor deficiency protein 2 (MCFD2) from Homo sapiens (Human).